The following is a 412-amino-acid chain: Isocitrate dehydrogenase [NADP] cytoplasmic (412 aa).

NADP(+)-binding positions include 75 to 77 (TIT) and Arg-82. Thr-77 contacts substrate. Residues 94–100 (SPNGTIR), Arg-109, and Arg-132 contribute to the substrate site. Residue Asp-252 participates in Mn(2+) binding. An NADP(+)-binding site is contributed by Lys-260. Asp-275 lines the Mn(2+) pocket. Residues 310-315 (GTVTRH) and Asn-328 contribute to the NADP(+) site.

This sequence belongs to the isocitrate and isopropylmalate dehydrogenases family. As to quaternary structure, homodimer. Mg(2+) serves as cofactor. Mn(2+) is required as a cofactor. In terms of processing, the N-terminus is blocked.

The protein resides in the cytoplasm. The enzyme catalyses D-threo-isocitrate + NADP(+) = 2-oxoglutarate + CO2 + NADPH. With respect to regulation, by catabolite repression. Functionally, may function in the production of NADPH for fatty acid and sterol synthesis. This Saccharomyces cerevisiae (strain ATCC 204508 / S288c) (Baker's yeast) protein is Isocitrate dehydrogenase [NADP] cytoplasmic (IDP2).